A 222-amino-acid polypeptide reads, in one-letter code: MASTALSTASNPTQLCRTRASSLCKPVKGLGFGRERIPRNITCMAGSISADRVPDMSKRELMNLLLLGAISLPTFGMLVPYGSFLVPAGSGSNAGGVAAKDKLGNDILVEDWLKTHGPNDRTLAQGLKGDPTYLVVESDKTLATYGINAVCTHLGCVVPWNAAENKFLCPCHGSQYNNQGKVVRGPAPLSLALVHADVDDGKVVFVPWVETDFRTGDNPWWK.

The transit peptide at M1–S49 directs the protein to the chloroplast. The helical transmembrane segment at L66 to V86 threads the bilayer. The Rieske domain occupies V109–F205. The [2Fe-2S] cluster site is built by C151, H153, C169, and H172. C156 and C171 form a disulfide bridge.

This sequence belongs to the Rieske iron-sulfur protein family. As to quaternary structure, the 4 large subunits of the cytochrome b6-f complex are cytochrome b6, subunit IV (17 kDa polypeptide, petD), cytochrome f and the Rieske protein, while the 4 small subunits are petG, petL, petM and petN. The complex functions as a dimer. Requires [2Fe-2S] cluster as cofactor.

The protein resides in the plastid. Its subcellular location is the chloroplast thylakoid membrane. It catalyses the reaction 2 oxidized [plastocyanin] + a plastoquinol + 2 H(+)(in) = 2 reduced [plastocyanin] + a plastoquinone + 4 H(+)(out). Component of the cytochrome b6-f complex, which mediates electron transfer between photosystem II (PSII) and photosystem I (PSI), cyclic electron flow around PSI, and state transitions. The chain is Cytochrome b6-f complex iron-sulfur subunit, chloroplastic (petC) from Triticum aestivum (Wheat).